The primary structure comprises 99 residues: Small ribosomal subunit protein bS18 (99 aa).

Residues 1-25 show a composition bias toward basic and acidic residues; the sequence is MAEDHPSVDLDTHLSSPRESEESAP. The interval 1-28 is disordered; sequence MAEDHPSVDLDTHLSSPRESEESAPKKN.

Belongs to the bacterial ribosomal protein bS18 family. In terms of assembly, part of the 30S ribosomal subunit. Forms a tight heterodimer with protein bS6.

Functionally, binds as a heterodimer with protein bS6 to the central domain of the 16S rRNA, where it helps stabilize the platform of the 30S subunit. In Treponema pallidum (strain Nichols), this protein is Small ribosomal subunit protein bS18.